We begin with the raw amino-acid sequence, 309 residues long: Protein FdhE (309 aa).

Belongs to the FdhE family.

The protein resides in the cytoplasm. Necessary for formate dehydrogenase activity. The polypeptide is Protein FdhE (Escherichia coli (strain SMS-3-5 / SECEC)).